A 234-amino-acid chain; its full sequence is Zein-alpha A30 (234 aa).

The N-terminal stretch at 1–21 (MAAKIFCLLMLLGLSASAATA) is a signal peptide.

This sequence belongs to the zein family.

In terms of biological role, zeins are major seed storage proteins. The polypeptide is Zein-alpha A30 (Zea mays (Maize)).